The primary structure comprises 194 residues: Chitin synthase 2 (194 aa).

It belongs to the chitin synthase family. Class III subfamily.

It is found in the cell membrane. The catalysed reaction is [(1-&gt;4)-N-acetyl-beta-D-glucosaminyl](n) + UDP-N-acetyl-alpha-D-glucosamine = [(1-&gt;4)-N-acetyl-beta-D-glucosaminyl](n+1) + UDP + H(+). Polymerizes chitin, a structural polymer of the cell wall and septum, by transferring the sugar moiety of UDP-GlcNAc to the non-reducing end of the growing chitin polymer. The polypeptide is Chitin synthase 2 (CHS2) (Ajellomyces capsulatus (Darling's disease fungus)).